The sequence spans 458 residues: UDP-N-acetylmuramate--L-alanine ligase (458 aa).

Residue glycine 115 to threonine 121 participates in ATP binding.

It belongs to the MurCDEF family.

It localises to the cytoplasm. It catalyses the reaction UDP-N-acetyl-alpha-D-muramate + L-alanine + ATP = UDP-N-acetyl-alpha-D-muramoyl-L-alanine + ADP + phosphate + H(+). Its pathway is cell wall biogenesis; peptidoglycan biosynthesis. Cell wall formation. This chain is UDP-N-acetylmuramate--L-alanine ligase, found in Anaeromyxobacter dehalogenans (strain 2CP-1 / ATCC BAA-258).